A 199-amino-acid polypeptide reads, in one-letter code: MFTQNHFEIFSIDGLEARMAEIRSEIQPVFSEIGQKLLTKLSAKISNQEFYFHIAQHRRRTANAPENTWSAISTKARGYKMEAHFQLGIWEDYVFIYLSMIDQPKKQKEYAELLTNLSVEKMLTEDFIISKDHTKAEVFPLSAFSEAAERLGKVKKSELEIGRLWSKERFDGKEDSKILAEMLETIDQLLPIYQKLMEV.

It belongs to the UPF0637 family.

This is UPF0637 protein LACR_1918 from Lactococcus lactis subsp. cremoris (strain SK11).